Consider the following 137-residue polypeptide: ATP synthase epsilon chain 1 (137 aa).

This sequence belongs to the ATPase epsilon chain family. In terms of assembly, F-type ATPases have 2 components, CF(1) - the catalytic core - and CF(0) - the membrane proton channel. CF(1) has five subunits: alpha(3), beta(3), gamma(1), delta(1), epsilon(1). CF(0) has three main subunits: a, b and c.

Its subcellular location is the cell inner membrane. Functionally, produces ATP from ADP in the presence of a proton gradient across the membrane. This is ATP synthase epsilon chain 1 (atpC1) from Ralstonia nicotianae (strain ATCC BAA-1114 / GMI1000) (Ralstonia solanacearum).